A 60-amino-acid chain; its full sequence is Short neurotoxin 1 (60 aa).

Disulfide bonds link Cys-3-Cys-22, Cys-17-Cys-39, Cys-41-Cys-52, and Cys-53-Cys-58.

The protein belongs to the three-finger toxin family. Short-chain subfamily. Type I alpha-neurotoxin sub-subfamily. Expressed by the venom gland.

The protein localises to the secreted. Binds to muscle nicotinic acetylcholine receptor (nAChR) and inhibit acetylcholine from binding to the receptor, thereby impairing neuromuscular transmission. The recombinant protein also barely blocks voltage-gated potassium channel Kv1.3/KCNA3 (2.71% inhibition at 60 nM of toxin). The chain is Short neurotoxin 1 from Hydrophis lapemoides (Persian gulf sea snake).